The primary structure comprises 218 residues: uncharacterized protein (218 aa).

The protein belongs to the mimivirus L6/L7/L57 family.

This is an uncharacterized protein from Acanthamoeba polyphaga mimivirus (APMV).